The sequence spans 363 residues: Protein-arginine kinase (363 aa).

One can recognise a Phosphagen kinase C-terminal domain in the interval 24–255; sequence IVLSSRIRLA…EQLIAQERAA (232 aa). Residues 27 to 31, H92, R126, 177 to 181, and 208 to 213 each bind ATP; these read SSRIR, RASVM, and RGTYGE. The RDXXRA motif of the pArg binding pocket involved in allosteric regulation signature appears at 338–343; it reads RDVRRA.

The protein belongs to the ATP:guanido phosphotransferase family. Homodimer. Dimerization is important for full catalytic activity.

It catalyses the reaction L-arginyl-[protein] + ATP = N(omega)-phospho-L-arginyl-[protein] + ADP + H(+). With respect to regulation, appears to be allosterically activated by the binding of pArg-containing polypeptides to the pArg-binding pocket localized in the C-terminal domain of McsB. Its function is as follows. Catalyzes the specific phosphorylation of arginine residues in a large number of proteins. Is part of the bacterial stress response system, where it is involved in regulating the global heat shock repressor CtsR; phosphorylates arginine residues in the winged helix-turn-helix domain of CtsR, thereby preventing its binding to DNA and consequently inducing the expression of repressed genes. Protein arginine phosphorylation has a physiologically important role and is involved in the regulation of many critical cellular processes, such as protein homeostasis, motility, competence, and stringent and stress responses, by regulating gene expression and protein activity. Acts exclusively on Arg residues, since it cannot phosphorylate Tyr, Ser, Thr, His, Asp and Lys. Has no free arginine kinase activity. This is Protein-arginine kinase from Geobacillus stearothermophilus (Bacillus stearothermophilus).